Consider the following 294-residue polypeptide: Acetylglutamate kinase (294 aa).

Substrate contacts are provided by residues 63–64, Arg85, and Asn188; that span reads GG.

It belongs to the acetylglutamate kinase family. ArgB subfamily.

Its subcellular location is the cytoplasm. The catalysed reaction is N-acetyl-L-glutamate + ATP = N-acetyl-L-glutamyl 5-phosphate + ADP. It participates in amino-acid biosynthesis; L-arginine biosynthesis; N(2)-acetyl-L-ornithine from L-glutamate: step 2/4. Functionally, catalyzes the ATP-dependent phosphorylation of N-acetyl-L-glutamate. In Methanococcus maripaludis (strain C5 / ATCC BAA-1333), this protein is Acetylglutamate kinase.